The primary structure comprises 264 residues: Thymidylate synthase (264 aa).

Arg21 is a binding site for dUMP. (6R)-5,10-methylene-5,6,7,8-tetrahydrofolate is bound at residue His51. Position 126-127 (126-127 (RR)) interacts with dUMP. Cys146 acts as the Nucleophile in catalysis. Residues 166–169 (RSCD), Asn177, and 207–209 (HLY) each bind dUMP. Residue Asp169 coordinates (6R)-5,10-methylene-5,6,7,8-tetrahydrofolate. Residue Ala263 coordinates (6R)-5,10-methylene-5,6,7,8-tetrahydrofolate.

The protein belongs to the thymidylate synthase family. Bacterial-type ThyA subfamily. In terms of assembly, homodimer.

It localises to the cytoplasm. It catalyses the reaction dUMP + (6R)-5,10-methylene-5,6,7,8-tetrahydrofolate = 7,8-dihydrofolate + dTMP. It participates in pyrimidine metabolism; dTTP biosynthesis. Its function is as follows. Catalyzes the reductive methylation of 2'-deoxyuridine-5'-monophosphate (dUMP) to 2'-deoxythymidine-5'-monophosphate (dTMP) while utilizing 5,10-methylenetetrahydrofolate (mTHF) as the methyl donor and reductant in the reaction, yielding dihydrofolate (DHF) as a by-product. This enzymatic reaction provides an intracellular de novo source of dTMP, an essential precursor for DNA biosynthesis. This is Thymidylate synthase from Aeromonas hydrophila subsp. hydrophila (strain ATCC 7966 / DSM 30187 / BCRC 13018 / CCUG 14551 / JCM 1027 / KCTC 2358 / NCIMB 9240 / NCTC 8049).